Here is a 431-residue protein sequence, read N- to C-terminus: Islet cell autoantigen 1-like protein (431 aa).

One can recognise an AH domain in the interval 44–247 (ASDAELDAKL…TAQMMTQIQE (204 aa)). Disordered regions lie at residues 295–316 (EEEE…PRDS) and 351–372 (CGSP…SLTS). Positions 301–316 (RFEREPAVARALPRDS) are enriched in basic and acidic residues. The segment covering 356–372 (TGLTSQEPSVGPGSLTS) has biased composition (polar residues).

The polypeptide is Islet cell autoantigen 1-like protein (Ica1l) (Mus musculus (Mouse)).